We begin with the raw amino-acid sequence, 307 residues long: Mitochondrial 2-oxodicarboxylate carrier 2 (307 aa).

6 consecutive transmembrane segments (helical) span residues 10–30, 76–95, 122–142, 171–191, 215–235, and 280–300; these read LPFI…LTVM, SRLY…KRAT, IAAG…FELI, GLYK…GGYF, LIAG…FDVV, and CRLA…MNFF. Solcar repeat units lie at residues 10–106, 116–200, and 209–299; these read LPFI…YQKI, TTQK…VRNS, and QKTR…MMNF.

It belongs to the mitochondrial carrier (TC 2.A.29) family.

It localises to the mitochondrion inner membrane. Functionally, transports C5-C7 oxodicarboxylates across the inner membranes of mitochondria. Can transport 2-oxoadipate, 2-oxoglutarate, adipate, glutarate, 2-oxopimelate, oxaloacetate, citrate and malate. The main physiological role is probably to supply 2-oxoadipate and 2-oxoglutarate from the mitochondrial matrix to the cytosol where they are used in the biosynthesis of lysine and glutamate, respectively, and in lysine catabolism. The polypeptide is Mitochondrial 2-oxodicarboxylate carrier 2 (ODC2) (Saccharomyces cerevisiae (strain ATCC 204508 / S288c) (Baker's yeast)).